The sequence spans 78 residues: COP9 signalosome complex subunit 5b (78 aa).

It belongs to the peptidase M67A family. CSN5 subfamily. Component of the CSN complex, probably composed of CSN1, CSN2, CSN3, CSN4, CSN5 (CSN5A or CSN5B), CSN6 (CSN6A or CSN6B), CSN7 and CSN8. It depends on a divalent metal cation as a cofactor.

It localises to the cytoplasm. Its subcellular location is the nucleus. Functionally, probable protease subunit of the COP9 signalosome complex (CSN), a complex involved in various cellular and developmental processes such as photomorphogenesis and auxin and jasmonate responses. The CSN complex is an essential regulator of the ubiquitin (Ubl) conjugation pathway by mediating the deneddylation of the cullin subunits of the SCF-type E3 ligase complexes, leading to decrease the Ubl ligase activity of SCF. In the complex, it probably acts as the catalytic center that mediates the cleavage of Nedd8 from cullins. It however has no metalloprotease activity by itself and requires the other subunits of the CSN complex. The CSN complex is involved in repression of photomorphogenesis in darkness by regulating the activity of COP1-containing Ubl ligase complexes. The protein is COP9 signalosome complex subunit 5b (CSN5B) of Brassica oleracea (Wild cabbage).